Reading from the N-terminus, the 320-residue chain is L-lactate dehydrogenase (320 aa).

Residues Val19, Asp40, Arg45, and 85–86 each bind NAD(+); that span reads GA. Substrate is bound by residues Gln88 and Arg94. NAD(+)-binding positions include Ser107, 124-126, and Ser149; that span reads ITN. Substrate is bound at residue 126–129; it reads NPVD. 154–157 contributes to the substrate binding site; the sequence is DSAR. Beta-D-fructose 1,6-bisphosphate is bound by residues Arg159 and His174. Residue His181 is the Proton acceptor of the active site. A Phosphotyrosine modification is found at Tyr228. Thr237 provides a ligand contact to substrate.

This sequence belongs to the LDH/MDH superfamily. LDH family. In terms of assembly, homotetramer.

It is found in the cytoplasm. The enzyme catalyses (S)-lactate + NAD(+) = pyruvate + NADH + H(+). It participates in fermentation; pyruvate fermentation to lactate; (S)-lactate from pyruvate: step 1/1. Its activity is regulated as follows. Allosterically activated by fructose 1,6-bisphosphate (FBP). In terms of biological role, catalyzes the conversion of lactate to pyruvate. The polypeptide is L-lactate dehydrogenase (Bifidobacterium animalis subsp. lactis (strain AD011)).